Here is a 234-residue protein sequence, read N- to C-terminus: MTYKRVLLKLSGEALMGDKPYGIDPAIVQSIAEDVEKVIANNVQLAIVVGGGNIFRGLKGSADGMDRATADYVGMLATVMNAISLQDGLERVGVETRVQTAIEMQEIAEPYIRRRAMRHLEKGRVVVFGGGCGNPFFTTDTTAALRAAEINAEVVMKATKVDGVYDRDPNKFNEAKKYSSLSYQQVLSDEIAVMDSTAIALCKDNNIPIMVFDIFKKGNISRAVAGESIGSLIS.

Residue lysine 9–glycine 12 coordinates ATP. Glycine 51 lines the UMP pocket. The ATP site is built by glycine 52 and arginine 56. Residues aspartate 71 and cysteine 132–threonine 139 contribute to the UMP site. Residues threonine 159, tyrosine 165, and aspartate 168 each coordinate ATP.

Belongs to the UMP kinase family. As to quaternary structure, homohexamer.

It is found in the cytoplasm. It carries out the reaction UMP + ATP = UDP + ADP. It functions in the pathway pyrimidine metabolism; CTP biosynthesis via de novo pathway; UDP from UMP (UMPK route): step 1/1. With respect to regulation, inhibited by UTP. Functionally, catalyzes the reversible phosphorylation of UMP to UDP. The sequence is that of Uridylate kinase from Prochlorococcus marinus (strain MIT 9515).